The primary structure comprises 350 residues: Putative D-xylulose reductase (350 aa).

Residues Cys43, His68, and Glu154 each coordinate Zn(2+).

Belongs to the zinc-containing alcohol dehydrogenase family. Zn(2+) serves as cofactor.

The enzyme catalyses xylitol + NAD(+) = D-xylulose + NADH + H(+). The polypeptide is Putative D-xylulose reductase (Agrobacterium fabrum (strain C58 / ATCC 33970) (Agrobacterium tumefaciens (strain C58))).